Reading from the N-terminus, the 98-residue chain is MRGETPTLQDYVLDLQPEATDLHCYEQLPDSSDEEDVIDSPAGQAEPDTSNYNIVTFCCQCKSTLRLCVQSTQVDIRILQELLMGSFGIVCPNCSTRL.

The segment at 1 to 40 (MRGETPTLQDYVLDLQPEATDLHCYEQLPDSSDEEDVIDS) is E7 terminal domain. The short motif at 22–26 (LHCYE) is the LXCXE motif; interaction with host RB1 and TMEM173/STING element. The segment at 58–94 (CCQCKSTLRLCVQSTQVDIRILQELLMGSFGIVCPNC) is a zinc-finger region. The Nuclear export signal signature appears at 76-84 (IRILQELLM).

The protein belongs to the papillomaviridae E7 protein family. Homodimer. Homooligomer. Interacts with host RB1; this interaction induces dissociation of RB1-E2F1 complex thereby disrupting RB1 activity. Interacts with host EP300; this interaction represses EP300 transcriptional activity. Interacts with protein E2; this interaction inhibits E7 oncogenic activity. Interacts with host TMEM173/STING; this interaction impairs the ability of TMEM173/STING to sense cytosolic DNA and promote the production of type I interferon (IFN-alpha and IFN-beta). Post-translationally, highly phosphorylated.

It localises to the host cytoplasm. The protein resides in the host nucleus. E7 protein has both transforming and trans-activating activities. Disrupts the function of host retinoblastoma protein RB1/pRb, which is a key regulator of the cell cycle. Induces the disassembly of the E2F1 transcription factors from RB1, with subsequent transcriptional activation of E2F1-regulated S-phase genes. Inactivation of the ability of RB1 to arrest the cell cycle is critical for cellular transformation, uncontrolled cellular growth and proliferation induced by viral infection. Stimulation of progression from G1 to S phase allows the virus to efficiently use the cellular DNA replicating machinery to achieve viral genome replication. Interferes with histone deacetylation mediated by HDAC1 and HDAC2, leading to activation of transcription. Its function is as follows. Plays a role in viral genome replication by driving entry of quiescent cells into the cell cycle. Stimulation of progression from G1 to S phase allows the virus to efficiently use the cellular DNA replicating machinery to achieve viral genome replication. E7 protein has both transforming and trans-activating activities. Induces the disassembly of the E2F1 transcription factor from RB1, with subsequent transcriptional activation of E2F1-regulated S-phase genes. Interferes with host histone deacetylation mediated by HDAC1 and HDAC2, leading to transcription activation. Also plays a role in the inhibition of both antiviral and antiproliferative functions of host interferon alpha. Interaction with host TMEM173/STING impairs the ability of TMEM173/STING to sense cytosolic DNA and promote the production of type I interferon (IFN-alpha and IFN-beta). The chain is Protein E7 from Homo sapiens (Human).